The chain runs to 258 residues: Terpene cyclase macJ (258 aa).

7 helical membrane-spanning segments follow: residues 29–49 (VPDG…ILMA), 58–78 (YAMP…YGFV), 83–103 (LLNQ…FYAI), 124–144 (IIVV…ATFI), 151–171 (VVFM…IAQL), 181–201 (SWGI…CFFW), and 220–240 (FLLL…VYVQ).

It belongs to the paxB family.

It is found in the membrane. It participates in secondary metabolite biosynthesis; terpenoid biosynthesis. Terpene cyclase; part of the gene cluster that mediates the biosynthesis of macrophorins, isoprenoid epoxycyclohexenones containing cyclized drimane moieties. The first step of the pathway is the synthesis of 6-methylsalicylic acid (6-MSA) by the polyketide synthase macA. 6-MSA is then converted to m-cresol by the decarboxylase macB. The cytochrome P450 monooxygenase macC then catalyzes the oxidation of m-cresol to toluquinol. Epoxidation of toluquinol is then performed by the short chain dehydrogenase macD, with the help of macE, and a further prenylation by macG leads to 7-deacetoxyyanuthone A. The next step is the hydroxylation of C-22 of 7-deacetoxyyanuthone A by the cytochrome P450 monooxygenase macH to yield 22-deacetylyanuthone A. O-Mevalon transferase macI then attaches mevalon to the hydroxyl group of 22-deacetylyanuthone A to produce yanuthone E. The terpene cyclase macJ catalyzes the cyclization of 22-deacetylyanuthone A to macrophorin A. MacJ is also able to catalyze cyclization of yanuthone E and 7-deacetoxyyanuthone A to their corresponding macrophorins. The macJ products can be further modified by macH and macJ, as well as by the FAD-dependent monooxygenase macF, to produce additional macrophorins, including 4'-oxomacrophorin A, 4'-oxomacrophorin D and 4'-oxomacrophorin E. In Penicillium terrestre, this protein is Terpene cyclase macJ.